The primary structure comprises 776 residues: MKLVIVESPAKAKTINKYLGDEFKVIASFGHIRDLPSKKGSVLPDENFAMKYDISDKAGKYVDAIVKDAKKADAVYLATDPDREGESISWHVAEVIKEKNQVKSDDFFKRVAFNEITKKAIIHAVENPRKLDTNLVNAQQARRALDYLVGFTLSPLLWRKLPGCKSAGRVQSVALRLICEREDEIERFKSEEYWDISLKMQNSNNELFTAKLTHVNDQKLEKFSIINEKNAKDLTKKLKSHKFHVDKIEKKQQKRQPQPPFITSSLQQEAARKLGFSAKKTMQIAQKLYEGVDIGKETIGLITYMRTDGVTLSNDAIADIRKLIDKSYGDKYLPTSPRIYKSKVKNAQEAHEAIRPTNITYTPDSLKEKLDKDYYKLYELIWKRTIACQMENVIMDLVVANLASENKEYLAKANGSTIAFDGFYKVYRESMDDEAEEENKMLPPLKEQEPLKTKAVIPNQHFTEPPPRYSEASLVKKLEELGIGRPSTYASILSVLQDRKYVALEKKRFIPEELGRLVTVFLVGFFKKYVEYDFTAGLENELDAIAAGKLEWKAALNNFWSGFNHNIESVNEQKITEIISYVQKALDYHLFGENKESKICPSCNTGELSLKLGKFGAFLACSNYPECTFRKSIVSGNDNNENEGEPAAMPNENKVLGTDKDGVEIYLKKGPYGPYIQLGKQEGKVKPKRSPVPASLNQNDITLDIALKLLSLPLKIGIHKDSDEEIMIGYGKFGPYIKYMGQFISVQKKYDFLNLSLDDAMKLIEENKAKLEKKQA.

One can recognise a Toprim domain in the interval 1–111; it reads MKLVIVESPA…VKSDDFFKRV (111 aa). 2 residues coordinate Mg(2+): glutamate 7 and aspartate 80. The Topo IA-type catalytic domain maps to 132 to 568; that stretch reads DTNLVNAQQA…FWSGFNHNIE (437 aa). An interaction with DNA region spans residues 166–171; the sequence is SAGRVQ. The active-site O-(5'-phospho-DNA)-tyrosine intermediate is the tyrosine 304. A C4-type zinc finger spans residues 600–627; that stretch reads CPSCNTGELSLKLGKFGAFLACSNYPEC.

The protein belongs to the type IA topoisomerase family. In terms of assembly, monomer. Requires Mg(2+) as cofactor.

It catalyses the reaction ATP-independent breakage of single-stranded DNA, followed by passage and rejoining.. Functionally, releases the supercoiling and torsional tension of DNA, which is introduced during the DNA replication and transcription, by transiently cleaving and rejoining one strand of the DNA duplex. Introduces a single-strand break via transesterification at a target site in duplex DNA. The scissile phosphodiester is attacked by the catalytic tyrosine of the enzyme, resulting in the formation of a DNA-(5'-phosphotyrosyl)-enzyme intermediate and the expulsion of a 3'-OH DNA strand. The free DNA strand then undergoes passage around the unbroken strand, thus removing DNA supercoils. Finally, in the religation step, the DNA 3'-OH attacks the covalent intermediate to expel the active-site tyrosine and restore the DNA phosphodiester backbone. This Rickettsia conorii (strain ATCC VR-613 / Malish 7) protein is DNA topoisomerase 1.